Reading from the N-terminus, the 624-residue chain is DNA mismatch repair protein MutL (624 aa).

A disordered region spans residues 416–436; the sequence is LTPSVDQPDTGDGENPVAPEK.

Belongs to the DNA mismatch repair MutL/HexB family.

This protein is involved in the repair of mismatches in DNA. It is required for dam-dependent methyl-directed DNA mismatch repair. May act as a 'molecular matchmaker', a protein that promotes the formation of a stable complex between two or more DNA-binding proteins in an ATP-dependent manner without itself being part of a final effector complex. This Chlorobaculum tepidum (strain ATCC 49652 / DSM 12025 / NBRC 103806 / TLS) (Chlorobium tepidum) protein is DNA mismatch repair protein MutL.